Reading from the N-terminus, the 296-residue chain is tRNA uridine(34) hydroxylase (296 aa).

Residues 130 to 225 (RGDDVVFFDG…YGEAYGNDGY (96 aa)) form the Rhodanese domain. The Cysteine persulfide intermediate role is filled by Cys185.

It belongs to the TrhO family.

It carries out the reaction uridine(34) in tRNA + AH2 + O2 = 5-hydroxyuridine(34) in tRNA + A + H2O. Its function is as follows. Catalyzes oxygen-dependent 5-hydroxyuridine (ho5U) modification at position 34 in tRNAs. In Corynebacterium kroppenstedtii (strain DSM 44385 / JCM 11950 / CIP 105744 / CCUG 35717), this protein is tRNA uridine(34) hydroxylase.